The primary structure comprises 176 residues: Cytochrome b (176 aa).

Transmembrane regions (helical) follow at residues 33–53 (FGSLLGICLAVQILTGLFLAM), 77–98 (WLLRYLHANGASMFFICLYLHI), and 113–133 (WNVGVILLFAVMATAFMGYVL). Positions 83 and 97 each coordinate heme b.

The protein belongs to the cytochrome b family. In terms of assembly, the cytochrome bc1 complex contains 11 subunits: 3 respiratory subunits (MT-CYB, CYC1 and UQCRFS1), 2 core proteins (UQCRC1 and UQCRC2) and 6 low-molecular weight proteins (UQCRH/QCR6, UQCRB/QCR7, UQCRQ/QCR8, UQCR10/QCR9, UQCR11/QCR10 and a cleavage product of UQCRFS1). This cytochrome bc1 complex then forms a dimer. It depends on heme b as a cofactor.

It is found in the mitochondrion inner membrane. In terms of biological role, component of the ubiquinol-cytochrome c reductase complex (complex III or cytochrome b-c1 complex) that is part of the mitochondrial respiratory chain. The b-c1 complex mediates electron transfer from ubiquinol to cytochrome c. Contributes to the generation of a proton gradient across the mitochondrial membrane that is then used for ATP synthesis. This is Cytochrome b (MT-CYB) from Eumops glaucinus (Wagner's mastiff bat).